A 689-amino-acid chain; its full sequence is Glycine--tRNA ligase beta subunit (689 aa).

It belongs to the class-II aminoacyl-tRNA synthetase family. Tetramer of two alpha and two beta subunits.

It localises to the cytoplasm. The catalysed reaction is tRNA(Gly) + glycine + ATP = glycyl-tRNA(Gly) + AMP + diphosphate. The sequence is that of Glycine--tRNA ligase beta subunit from Salmonella arizonae (strain ATCC BAA-731 / CDC346-86 / RSK2980).